A 204-amino-acid polypeptide reads, in one-letter code: Peptidyl-tRNA hydrolase (204 aa).

TRNA is bound at residue Tyr14. His19 functions as the Proton acceptor in the catalytic mechanism. Residues Tyr64, Asn66, and Asn112 each contribute to the tRNA site.

Belongs to the PTH family. In terms of assembly, monomer.

Its subcellular location is the cytoplasm. It catalyses the reaction an N-acyl-L-alpha-aminoacyl-tRNA + H2O = an N-acyl-L-amino acid + a tRNA + H(+). Hydrolyzes ribosome-free peptidyl-tRNAs (with 1 or more amino acids incorporated), which drop off the ribosome during protein synthesis, or as a result of ribosome stalling. Functionally, catalyzes the release of premature peptidyl moieties from peptidyl-tRNA molecules trapped in stalled 50S ribosomal subunits, and thus maintains levels of free tRNAs and 50S ribosomes. The chain is Peptidyl-tRNA hydrolase from Nitrobacter hamburgensis (strain DSM 10229 / NCIMB 13809 / X14).